A 422-amino-acid chain; its full sequence is Serine--tRNA ligase (422 aa).

229–231 (TAE) contributes to the L-serine binding site. ATP is bound at residue 260–262 (RKE). E283 contributes to the L-serine binding site. An ATP-binding site is contributed by 347 to 350 (EISS). Residue S383 coordinates L-serine.

The protein belongs to the class-II aminoacyl-tRNA synthetase family. Type-1 seryl-tRNA synthetase subfamily. In terms of assembly, homodimer. The tRNA molecule binds across the dimer.

It localises to the cytoplasm. The catalysed reaction is tRNA(Ser) + L-serine + ATP = L-seryl-tRNA(Ser) + AMP + diphosphate + H(+). The enzyme catalyses tRNA(Sec) + L-serine + ATP = L-seryl-tRNA(Sec) + AMP + diphosphate + H(+). It functions in the pathway aminoacyl-tRNA biosynthesis; selenocysteinyl-tRNA(Sec) biosynthesis; L-seryl-tRNA(Sec) from L-serine and tRNA(Sec): step 1/1. Catalyzes the attachment of serine to tRNA(Ser). Is also able to aminoacylate tRNA(Sec) with serine, to form the misacylated tRNA L-seryl-tRNA(Sec), which will be further converted into selenocysteinyl-tRNA(Sec). This chain is Serine--tRNA ligase, found in Natranaerobius thermophilus (strain ATCC BAA-1301 / DSM 18059 / JW/NM-WN-LF).